We begin with the raw amino-acid sequence, 600 residues long: NADH-quinone oxidoreductase subunit C/D (600 aa).

Positions 1 to 190 (MVNNMTDLTA…SPFELTKAKQ (190 aa)) are NADH dehydrogenase I subunit C. An NADH dehydrogenase I subunit D region spans residues 214–600 (DFMFLNLGPN…IDFVMSDVDR (387 aa)).

This sequence in the N-terminal section; belongs to the complex I 30 kDa subunit family. The protein in the C-terminal section; belongs to the complex I 49 kDa subunit family. In terms of assembly, NDH-1 is composed of 13 different subunits. Subunits NuoB, CD, E, F, and G constitute the peripheral sector of the complex.

It is found in the cell inner membrane. The catalysed reaction is a quinone + NADH + 5 H(+)(in) = a quinol + NAD(+) + 4 H(+)(out). In terms of biological role, NDH-1 shuttles electrons from NADH, via FMN and iron-sulfur (Fe-S) centers, to quinones in the respiratory chain. The immediate electron acceptor for the enzyme in this species is believed to be ubiquinone. Couples the redox reaction to proton translocation (for every two electrons transferred, four hydrogen ions are translocated across the cytoplasmic membrane), and thus conserves the redox energy in a proton gradient. This is NADH-quinone oxidoreductase subunit C/D from Escherichia coli O157:H7.